Reading from the N-terminus, the 65-residue chain is Large ribosomal subunit protein uL29 (65 aa).

It belongs to the universal ribosomal protein uL29 family.

The chain is Large ribosomal subunit protein uL29 from Lactobacillus helveticus (strain DPC 4571).